Here is a 340-residue protein sequence, read N- to C-terminus: Mitotic checkpoint protein BUB3.1 (340 aa).

Positions 1 to 20 are disordered; it reads MTTVTPSAGRELSNPPSDGI. WD repeat units follow at residues 15 to 54, 96 to 135, 142 to 179, 239 to 278, and 281 to 324; these read PPSD…LKGE, THDK…GPER, LQPE…QPEQ, DIVY…RLYQ, and KYPT…RSVN.

Belongs to the WD repeat BUB3 family. In terms of assembly, part of the mitotic checkpoint complex (MCC); interacts with CDC20-1 and CDC20-2. Interacts with MAD2 and BUBR1. Expressed in actively dividing tissues, early in organ development, in young leaves, lateral root primordia and root meristems, flower buds, flowers and siliques.

It is found in the nucleus. It localises to the chromosome. Its subcellular location is the centromere. The protein resides in the kinetochore. The protein localises to the cytoplasm. It is found in the cytoskeleton. It localises to the phragmoplast. Its subcellular location is the spindle. In terms of biological role, has a dual function in spindle-assembly checkpoint signaling and in promoting the establishment of correct kinetochore-microtubule (K-MT) attachments. Promotes the formation of stable end-on bipolar attachments. Necessary for kinetochore localization of BUB1. The BUB1/BUB3 complex plays a role in the inhibition of anaphase-promoting complex or cyclosome (APC/C) when spindle-assembly checkpoint is activated and inhibits the ubiquitin ligase activity of APC/C by phosphorylating its activator CDC20. Essential for gametophyte development. The protein is Mitotic checkpoint protein BUB3.1 (BUB3.1) of Arabidopsis thaliana (Mouse-ear cress).